The primary structure comprises 398 residues: Protein FAM53A (398 aa).

The tract at residues 85–253 (QWQPQSPRPG…TSTPALGGRR (169 aa)) is disordered. Residues 103-115 (VDPSESTGSSTAP) show a composition bias toward polar residues. A compositionally biased stretch (basic and acidic residues) spans 123-132 (SLSEPEELVR). S125 is modified (phosphoserine). 2 stretches are compositionally biased toward low complexity: residues 176-193 (STGP…ASGG) and 234-250 (TPLP…PALG). The Nuclear localization signal signature appears at 268 to 276 (KRSRRKRRR). A phosphoserine mark is found at S301 and S304. Positions 336–398 (PGCSQRGLRT…ELDLEQIENN (63 aa)) are disordered. Residues 363–375 (GSRRSSGDPRDGD) show a composition bias toward basic and acidic residues.

The protein belongs to the FAM53 family.

Its subcellular location is the nucleus. Functionally, may play an important role in neural development; the dorsomedial roof of the third ventricle. This is Protein FAM53A from Homo sapiens (Human).